The chain runs to 350 residues: NAD-dependent protein deacetylase sirtuin-2 (350 aa).

Residues 4-14 (LRNLFTQTLGL) carry the Nuclear export signal motif. The residue at position 16 (serine 16) is a Phosphoserine. The Deacetylase sirtuin-type domain maps to 20–301 (RLLDELTLEG…LALADLLGWK (282 aa)). NAD(+)-binding positions include 48 to 52 (AGIST) and 58 to 60 (DFR). Serine 63 carries the phosphoserine modification. Position 130-133 (130-133 (QNID)) interacts with NAD(+). Histidine 150 acts as the Proton acceptor in catalysis. 2 residues coordinate Zn(2+): cysteine 158 and cysteine 163. Serine 170 carries the phosphoserine modification. Residues cysteine 184 and cysteine 187 each coordinate Zn(2+). NAD(+) is bound by residues 225–226 (TS), 249–251 (NKE), and cysteine 287. The interval 312–350 (ANIDAQSGSQASNPSATVSPRKSPPPAKEAARTKEKEEH) is disordered. A compositionally biased stretch (polar residues) spans 315–331 (DAQSGSQASNPSATVSP). 2 positions are modified to phosphoserine: serine 330 and serine 334. Residues 340 to 350 (EAARTKEKEEH) are compositionally biased toward basic and acidic residues.

It belongs to the sirtuin family. Class I subfamily. In terms of assembly, interacts with CDC20, FOXO3 and FZR1. Associates with microtubules in primary cortical mature neurons. Homotrimer. Interacts (via both phosphorylated, unphosphorylated, active or inactive forms) with HDAC6; the interaction is necessary for the complex to interact with alpha-tubulin, suggesting that these proteins belong to a large complex that deacetylates the cytoskeleton. Interacts with FOXO1; the interaction is disrupted upon serum-starvation or oxidative stress, leading to increased level of acetylated FOXO1 and induction of autophagy. Interacts with RELA; the interaction occurs in the cytoplasm and is increased in a TNF-alpha-dependent manner. Interacts with HOXA10; the interaction is direct. Interacts with YWHAB and YWHAG; the interactions occur in a AKT-dependent manner and increase SIRT2-dependent TP53 deacetylation. Interacts with MAPK1/ERK2 and MAPK3/ERK1; the interactions increase SIRT2 stability and deacetylation activity. Interacts (phosphorylated form) with KMT5A isoform 2; the interaction is direct, stimulates KMT5A-mediated methyltransferase activity on histone at 'Lys-20' (H4K20me1) and is increased in a H(2)O(2)-induced oxidative stress-dependent manner. Interacts with G6PD; the interaction is enhanced by H(2)O(2) treatment. Interacts with a G1/S-specific cyclin E-CDK2 complex. Interacts with AURKA, CDK5R1 (p35 form) and CDK5 and HIF1A. Interacts with the tRNA ligase SARS1; recruited to the VEGFA promoter via interaction with SARS1. Interacts with BEX4; negatively regulates alpha-tubulin deacetylation by SIRT2. Zn(2+) serves as cofactor. Phosphorylated at phosphoserine and phosphothreonine. Phosphorylated at Ser-330 by a mitotic kinase CDK1/cyclin B at the G2/M transition; phosphorylation regulates the delay in cell-cycle progression. Phosphorylated at Ser-330 by a mitotic kinase G1/S-specific cyclin E/Cdk2 complex; phosphorylation inactivates SIRT2-mediated alpha-tubulin deacetylation and thereby negatively regulates cell adhesion, cell migration and neurite outgrowth during neuronal differentiation. Phosphorylated by cyclin A/Cdk2 and p35-Cdk5 complexes and to a lesser extent by the cyclin D3/Cdk4 and cyclin B/Cdk1, in vitro. Dephosphorylated at Ser-330 by CDC14A and CDC14B around early anaphase. Post-translationally, acetylated by EP300; acetylation leads both to the decreased of SIRT2-mediated alpha-tubulin deacetylase activity and SIRT2-mediated down-regulation of TP53 transcriptional activity. In terms of processing, ubiquitinated. As to expression, expressed in the cerebellum, cerebral cortex and cervival spinal cord. Expressed in Purkinje cells, oligodendrocytes and Schwann cells (at protein level). Expressed in the central nervous system (CNS).

Its subcellular location is the nucleus. It is found in the cytoplasm. The protein localises to the perinuclear region. It localises to the cytoskeleton. The protein resides in the microtubule organizing center. Its subcellular location is the centrosome. It is found in the centriole. The protein localises to the spindle. It localises to the midbody. The protein resides in the chromosome. Its subcellular location is the perikaryon. It is found in the cell projection. The protein localises to the growth cone. It localises to the myelin membrane. It catalyses the reaction N(6)-acetyl-L-lysyl-[protein] + NAD(+) + H2O = 2''-O-acetyl-ADP-D-ribose + nicotinamide + L-lysyl-[protein]. The catalysed reaction is N(6)-tetradecanoyl-L-lysyl-[protein] + NAD(+) + H2O = 2''-O-tetradecanoyl-ADP-D-ribose + nicotinamide + L-lysyl-[protein]. The enzyme catalyses N(6)-hexadecanoyl-L-lysyl-[protein] + NAD(+) + H2O = 2''-O-hexadecanoyl-ADP-D-ribose + nicotinamide + L-lysyl-[protein]. With respect to regulation, inhibited by Sirtinol, A3 and M15 small molecules. Inhibited by nicotinamide. Inhibited by a macrocyclic peptide inhibitor S2iL5. Inhibited by EP300-induced acetylation. NAD-dependent protein deacetylase, which deacetylates internal lysines on histone and alpha-tubulin as well as many other proteins such as key transcription factors. Participates in the modulation of multiple and diverse biological processes such as cell cycle control, genomic integrity, microtubule dynamics, cell differentiation, metabolic networks, and autophagy. Plays a major role in the control of cell cycle progression and genomic stability. Functions in the antephase checkpoint preventing precocious mitotic entry in response to microtubule stress agents, and hence allowing proper inheritance of chromosomes. Positively regulates the anaphase promoting complex/cyclosome (APC/C) ubiquitin ligase complex activity by deacetylating CDC20 and FZR1, then allowing progression through mitosis. Associates both with chromatin at transcriptional start sites (TSSs) and enhancers of active genes. Plays a role in cell cycle and chromatin compaction through epigenetic modulation of the regulation of histone H4 'Lys-20' methylation (H4K20me1) during early mitosis. Specifically deacetylates histone H4 at 'Lys-16' (H4K16ac) between the G2/M transition and metaphase enabling H4K20me1 deposition by KMT5A leading to ulterior levels of H4K20me2 and H4K20me3 deposition throughout cell cycle, and mitotic S-phase progression. Deacetylates KMT5A modulating KMT5A chromatin localization during the mitotic stress response. Also deacetylates histone H3 at 'Lys-57' (H3K56ac) during the mitotic G2/M transition. During oocyte meiosis progression, may deacetylate histone H4 at 'Lys-16' (H4K16ac) and alpha-tubulin, regulating spindle assembly and chromosome alignment by influencing microtubule dynamics and kinetochore function. Deacetylates histone H4 at 'Lys-16' (H4K16ac) at the VEGFA promoter and thereby contributes to regulate expression of VEGFA, a key regulator of angiogenesis. Deacetylates alpha-tubulin at 'Lys-40' and hence controls neuronal motility, oligodendroglial cell arbor projection processes and proliferation of non-neuronal cells. Phosphorylation at Ser-368 by a G1/S-specific cyclin E-CDK2 complex inactivates SIRT2-mediated alpha-tubulin deacetylation, negatively regulating cell adhesion, cell migration and neurite outgrowth during neuronal differentiation. Deacetylates PARD3 and participates in the regulation of Schwann cell peripheral myelination formation during early postnatal development and during postinjury remyelination. Involved in several cellular metabolic pathways. Plays a role in the regulation of blood glucose homeostasis by deacetylating and stabilizing phosphoenolpyruvate carboxykinase PCK1 activity in response to low nutrient availability. Acts as a key regulator in the pentose phosphate pathway (PPP) by deacetylating and activating the glucose-6-phosphate G6PD enzyme, and therefore, stimulates the production of cytosolic NADPH to counteract oxidative damage. Maintains energy homeostasis in response to nutrient deprivation as well as energy expenditure by inhibiting adipogenesis and promoting lipolysis. Attenuates adipocyte differentiation by deacetylating and promoting FOXO1 interaction to PPARG and subsequent repression of PPARG-dependent transcriptional activity. Plays a role in the regulation of lysosome-mediated degradation of protein aggregates by autophagy in neuronal cells. Deacetylates FOXO1 in response to oxidative stress or serum deprivation, thereby negatively regulating FOXO1-mediated autophagy. Deacetylates a broad range of transcription factors and co-regulators regulating target gene expression. Deacetylates transcriptional factor FOXO3 stimulating the ubiquitin ligase SCF(SKP2)-mediated FOXO3 ubiquitination and degradation. Deacetylates HIF1A and therefore promotes HIF1A degradation and inhibition of HIF1A transcriptional activity in tumor cells in response to hypoxia. Deacetylates RELA in the cytoplasm inhibiting NF-kappaB-dependent transcription activation upon TNF-alpha stimulation. Inhibits transcriptional activation by deacetylating p53/TP53 and EP300. Also deacetylates EIF5A. Functions as a negative regulator on oxidative stress-tolerance in response to anoxia-reoxygenation conditions. Plays a role as tumor suppressor. In addition to protein deacetylase activity, also has activity toward long-chain fatty acyl groups and mediates protein-lysine demyristoylation and depalmitoylation of target proteins, such as ARF6 and KRAS, thereby regulating their association with membranes. This is NAD-dependent protein deacetylase sirtuin-2 (Sirt2) from Rattus norvegicus (Rat).